Here is a 378-residue protein sequence, read N- to C-terminus: Long-chain-fatty-acid--luciferin-component ligase (378 aa).

Belongs to the LuxE family.

It carries out the reaction a long-chain fatty acid + L-cysteinyl-[protein] + ATP = an S-(long-chain fatty acyl)-L-cysteinyl-[protein] + AMP + diphosphate. It functions in the pathway lipid metabolism; fatty acid reduction for biolumincescence. In terms of biological role, acyl-protein synthetase activates tetradecanoic acid. It is a component of the fatty acid reductase complex responsible for converting tetradecanoic acid to the aldehyde which serves as substrate in the luciferase-catalyzed reaction. The sequence is that of Long-chain-fatty-acid--luciferin-component ligase from Aliivibrio fischeri (Vibrio fischeri).